A 379-amino-acid chain; its full sequence is Heme A synthase (379 aa).

Residues 1-28 (MAGSRSIFEEVQDSQKPAAMPGGVSRDR) are disordered. 8 consecutive transmembrane segments (helical) span residues 35–55 (VRVF…IGGL), 124–144 (FLGV…SVPV), 150–170 (LLLL…MVHS), 183–203 (RLAV…WYIL), 227–247 (ATGL…VAGI), 287–307 (FFHR…WIMA), 318–338 (AFDW…MTVM), and 341–361 (SPWY…TLIL). Heme is bound at residue histidine 289. Histidine 349 serves as a coordination point for heme.

It belongs to the COX15/CtaA family. Type 2 subfamily. Interacts with CtaB. Requires heme b as cofactor.

The protein resides in the cell membrane. It carries out the reaction Fe(II)-heme o + 2 A + H2O = Fe(II)-heme a + 2 AH2. It functions in the pathway porphyrin-containing compound metabolism; heme A biosynthesis; heme A from heme O: step 1/1. In terms of biological role, catalyzes the conversion of heme O to heme A by two successive hydroxylations of the methyl group at C8. The first hydroxylation forms heme I, the second hydroxylation results in an unstable dihydroxymethyl group, which spontaneously dehydrates, resulting in the formyl group of heme A. The chain is Heme A synthase from Jannaschia sp. (strain CCS1).